We begin with the raw amino-acid sequence, 609 residues long: Arginine--tRNA ligase (609 aa).

The 'HIGH' region signature appears at 132–142 (ANPTSSLHVGH).

Belongs to the class-I aminoacyl-tRNA synthetase family. As to quaternary structure, monomer.

The protein resides in the cytoplasm. The enzyme catalyses tRNA(Arg) + L-arginine + ATP = L-arginyl-tRNA(Arg) + AMP + diphosphate. The sequence is that of Arginine--tRNA ligase from Psychrobacter arcticus (strain DSM 17307 / VKM B-2377 / 273-4).